The following is a 528-amino-acid chain: Chaperonin GroEL, chloroplastic (528 aa).

ATP contacts are provided by residues 29-32 (TLGP), 86-90 (DGTTT), glycine 414, and aspartate 496.

The protein belongs to the chaperonin (HSP60) family. Forms a cylinder of 14 subunits composed of two heptameric rings stacked back-to-back. Interacts with the co-chaperonin GroES.

The protein localises to the plastid. It is found in the chloroplast. The catalysed reaction is ATP + H2O + a folded polypeptide = ADP + phosphate + an unfolded polypeptide.. Its function is as follows. Together with its co-chaperonin GroES, plays an essential role in assisting protein folding. The GroEL-GroES system forms a nano-cage that allows encapsulation of the non-native substrate proteins and provides a physical environment optimized to promote and accelerate protein folding. This Porphyra purpurea (Red seaweed) protein is Chaperonin GroEL, chloroplastic.